We begin with the raw amino-acid sequence, 813 residues long: Protein PPP4R3C1 (813 aa).

The disordered stretch occupies residues 730-813 (NESESAIEGQ…PPPKRPNLST (84 aa)). A compositionally biased stretch (acidic residues) spans 777 to 788 (YDTDDENDDDPY).

Belongs to the SMEK family.

This chain is Protein PPP4R3C1, found in Mus musculus (Mouse).